The following is a 264-amino-acid chain: 3-methyl-2-oxobutanoate hydroxymethyltransferase (264 aa).

Mg(2+)-binding residues include Asp-45 and Asp-84. 3-methyl-2-oxobutanoate contacts are provided by residues 45–46 (DS), Asp-84, and Lys-112. Glu-114 is a Mg(2+) binding site. The Proton acceptor role is filled by Glu-181.

Belongs to the PanB family. Homodecamer; pentamer of dimers. It depends on Mg(2+) as a cofactor.

It is found in the cytoplasm. The catalysed reaction is 3-methyl-2-oxobutanoate + (6R)-5,10-methylene-5,6,7,8-tetrahydrofolate + H2O = 2-dehydropantoate + (6S)-5,6,7,8-tetrahydrofolate. It functions in the pathway cofactor biosynthesis; (R)-pantothenate biosynthesis; (R)-pantoate from 3-methyl-2-oxobutanoate: step 1/2. In terms of biological role, catalyzes the reversible reaction in which hydroxymethyl group from 5,10-methylenetetrahydrofolate is transferred onto alpha-ketoisovalerate to form ketopantoate. This is 3-methyl-2-oxobutanoate hydroxymethyltransferase from Shigella flexneri serotype 5b (strain 8401).